The sequence spans 275 residues: Dermonecrotic toxin LarSicTox-alphaIII1 (275 aa).

Residue His-5 is part of the active site. Mg(2+)-binding residues include Glu-25 and Asp-27. His-41 acts as the Nucleophile in catalysis. Cystine bridges form between Cys-45-Cys-51 and Cys-47-Cys-190. Asp-85 contacts Mg(2+). Asn-252 is a glycosylation site (N-linked (GlcNAc...) asparagine).

The protein belongs to the arthropod phospholipase D family. Class II subfamily. It depends on Mg(2+) as a cofactor. In terms of tissue distribution, expressed by the venom gland.

The protein localises to the secreted. The catalysed reaction is an N-(acyl)-sphingosylphosphocholine = an N-(acyl)-sphingosyl-1,3-cyclic phosphate + choline. It catalyses the reaction an N-(acyl)-sphingosylphosphoethanolamine = an N-(acyl)-sphingosyl-1,3-cyclic phosphate + ethanolamine. The enzyme catalyses a 1-acyl-sn-glycero-3-phosphocholine = a 1-acyl-sn-glycero-2,3-cyclic phosphate + choline. It carries out the reaction a 1-acyl-sn-glycero-3-phosphoethanolamine = a 1-acyl-sn-glycero-2,3-cyclic phosphate + ethanolamine. Dermonecrotic toxins cleave the phosphodiester linkage between the phosphate and headgroup of certain phospholipids (sphingolipid and lysolipid substrates), forming an alcohol (often choline) and a cyclic phosphate. This toxin acts on sphingomyelin (SM). It may also act on ceramide phosphoethanolamine (CPE), lysophosphatidylcholine (LPC) and lysophosphatidylethanolamine (LPE), but not on lysophosphatidylserine (LPS), and lysophosphatidylglycerol (LPG). It acts by transphosphatidylation, releasing exclusively cyclic phosphate products as second products. Induces dermonecrosis, hemolysis, increased vascular permeability, edema, inflammatory response, and platelet aggregation. This Loxosceles arizonica (Arizona brown spider) protein is Dermonecrotic toxin LarSicTox-alphaIII1.